Reading from the N-terminus, the 545-residue chain is Chaperonin GroEL (545 aa).

Residues 29-32, lysine 50, 86-90, glycine 413, 479-481, and aspartate 496 contribute to the ATP site; these read TLGP, DGTTT, and NAA. Residues 525–545 form a disordered region; that stretch reads KPEKEKAPAAAGAPDMGGMDF. Residues 532-545 show a composition bias toward low complexity; the sequence is PAAAGAPDMGGMDF.

It belongs to the chaperonin (HSP60) family. As to quaternary structure, forms a cylinder of 14 subunits composed of two heptameric rings stacked back-to-back. Interacts with the co-chaperonin GroES.

It is found in the cytoplasm. It catalyses the reaction ATP + H2O + a folded polypeptide = ADP + phosphate + an unfolded polypeptide.. Its function is as follows. Together with its co-chaperonin GroES, plays an essential role in assisting protein folding. The GroEL-GroES system forms a nano-cage that allows encapsulation of the non-native substrate proteins and provides a physical environment optimized to promote and accelerate protein folding. This chain is Chaperonin GroEL, found in Deinococcus geothermalis (strain DSM 11300 / CIP 105573 / AG-3a).